Reading from the N-terminus, the 541-residue chain is 2-hydroxyacylsphingosine 1-beta-galactosyltransferase (541 aa).

Residues 1–20 (MKSYTPYFMLLWSAVGIARA) form the signal peptide. N-linked (GlcNAc...) asparagine glycosylation is found at asparagine 78, asparagine 333, and asparagine 442. A helical membrane pass occupies residues 472–492 (YFLLDIAFVLLLGAVALYFIV).

The protein belongs to the UDP-glycosyltransferase family. In terms of tissue distribution, brain, restricted to the oligodendrocyte-containing cell layers of cerebrum and cerebellum.

The protein localises to the membrane. It is found in the endoplasmic reticulum. It catalyses the reaction an N-acylsphing-4-enine + UDP-alpha-D-galactose = a beta-D-galactosyl-(1&lt;-&gt;1')-N-acylsphing-4-enine + UDP + H(+). The catalysed reaction is N-(2-hydroxy-hexanoyl)-sphing-4-enine + UDP-alpha-D-galactose = N-(2-hydroxy-hexanoyl)-beta-D-galactosyl-sphing-4-enine + UDP + H(+). The enzyme catalyses N-(2-hydroxy-hexanoyl)-sphinganine + UDP-alpha-D-galactose = N-(2-hydroxyhexanoyl)-beta-D-galactosylsphinganine + UDP + H(+). It carries out the reaction an N-acyl-sphingoid base + UDP-alpha-D-galactose = a D-galactosylceramide + UDP + H(+). Its pathway is sphingolipid metabolism; galactosylceramide biosynthesis. Catalyzes the transfer of galactose to ceramide, a key enzymatic step in the biosynthesis of galactocerebrosides, which are abundant sphingolipids of the myelin membrane of the central nervous system and peripheral nervous system. Galactosylates both hydroxy- and non-hydroxy fatty acid-containing ceramides and diglycerides. This is 2-hydroxyacylsphingosine 1-beta-galactosyltransferase from Rattus norvegicus (Rat).